The following is a 270-amino-acid chain: Aliphatic sulfonates import ATP-binding protein SsuB 1 (270 aa).

In terms of domain architecture, ABC transporter spans 18–232 (VQLRNVVRQF…DSGQAGFQLI (215 aa)). Residue 50–57 (GASGSGKT) participates in ATP binding. Positions 247 to 270 (PDTAPQASAPDSTFSELRRVASAR) are disordered. Residues 251–261 (PQASAPDSTFS) show a composition bias toward polar residues.

The protein belongs to the ABC transporter superfamily. Aliphatic sulfonates importer (TC 3.A.1.17.2) family. In terms of assembly, the complex is composed of two ATP-binding proteins (SsuB), two transmembrane proteins (SsuC) and a solute-binding protein (SsuA).

Its subcellular location is the cell inner membrane. It catalyses the reaction ATP + H2O + aliphatic sulfonate-[sulfonate-binding protein]Side 1 = ADP + phosphate + aliphatic sulfonateSide 2 + [sulfonate-binding protein]Side 1.. In terms of biological role, part of the ABC transporter complex SsuABC involved in aliphatic sulfonates import. Responsible for energy coupling to the transport system. This Pseudomonas syringae pv. tomato (strain ATCC BAA-871 / DC3000) protein is Aliphatic sulfonates import ATP-binding protein SsuB 1.